The sequence spans 150 residues: FAD synthase (150 aa).

ATP-binding positions include 11-12 (TF), 16-19 (HPGH), D96, and Y124.

It belongs to the archaeal FAD synthase family. Homodimer. Requires a divalent metal cation as cofactor.

The enzyme catalyses FMN + ATP + H(+) = FAD + diphosphate. Its pathway is cofactor biosynthesis; FAD biosynthesis; FAD from FMN: step 1/1. Its function is as follows. Catalyzes the transfer of the AMP portion of ATP to flavin mononucleotide (FMN) to produce flavin adenine dinucleotide (FAD) coenzyme. In Methanococcus maripaludis (strain C5 / ATCC BAA-1333), this protein is FAD synthase.